The sequence spans 445 residues: ATPase PAAT (445 aa).

Ser-177, Ser-182, Ser-254, and Ser-302 each carry phosphoserine. Residues Pro-426–Arg-445 form a disordered region. Basic and acidic residues predominate over residues Arg-432–Arg-445.

In terms of assembly, homodimer. Interacts with ABCB7, ABCB8/MITOSUR and ABCB10.

It is found in the cytoplasm. It localises to the mitochondrion. It carries out the reaction ATP + H2O = ADP + phosphate + H(+). ATPase that regulates mitochondrial ABC transporters ABCB7, ABCB8/MITOSUR and ABCB10. Regulates mitochondrial ferric concentration and heme biosynthesis and plays a role in the maintenance of mitochondrial homeostasis and cell survival. In Homo sapiens (Human), this protein is ATPase PAAT.